Here is a 320-residue protein sequence, read N- to C-terminus: Lipoyl synthase (320 aa).

The [4Fe-4S] cluster site is built by cysteine 67, cysteine 72, cysteine 78, cysteine 93, cysteine 97, cysteine 100, and serine 307. The Radical SAM core domain occupies 79-296; it reads FNHGTATFMI…RDKANEMGFE (218 aa).

Belongs to the radical SAM superfamily. Lipoyl synthase family. The cofactor is [4Fe-4S] cluster.

The protein resides in the cytoplasm. It catalyses the reaction [[Fe-S] cluster scaffold protein carrying a second [4Fe-4S](2+) cluster] + N(6)-octanoyl-L-lysyl-[protein] + 2 oxidized [2Fe-2S]-[ferredoxin] + 2 S-adenosyl-L-methionine + 4 H(+) = [[Fe-S] cluster scaffold protein] + N(6)-[(R)-dihydrolipoyl]-L-lysyl-[protein] + 4 Fe(3+) + 2 hydrogen sulfide + 2 5'-deoxyadenosine + 2 L-methionine + 2 reduced [2Fe-2S]-[ferredoxin]. It participates in protein modification; protein lipoylation via endogenous pathway; protein N(6)-(lipoyl)lysine from octanoyl-[acyl-carrier-protein]: step 2/2. Catalyzes the radical-mediated insertion of two sulfur atoms into the C-6 and C-8 positions of the octanoyl moiety bound to the lipoyl domains of lipoate-dependent enzymes, thereby converting the octanoylated domains into lipoylated derivatives. This Haemophilus influenzae (strain ATCC 51907 / DSM 11121 / KW20 / Rd) protein is Lipoyl synthase.